Here is a 34-residue protein sequence, read N- to C-terminus: Cycloamanide B proprotein (34 aa).

Residues 1 to 10 (MSDINAARLP) constitute a propeptide that is removed on maturation. The segment at residues 11–17 (SFFFPIP) is a cross-link (cyclopeptide (Ser-Pro)). Residues 18 to 34 (CISDDIEMVLTRGESLC) constitute a propeptide that is removed on maturation.

Belongs to the MSDIN fungal toxin family. Processed by the macrocyclase-peptidase enzyme POPB to yield a cyclic decapeptide. POPB first removes 10 residues from the N-terminus. Conformational trapping of the remaining peptide forces the enzyme to release this intermediate rather than proceed to macrocyclization. The enzyme rebinds the remaining peptide in a different conformation and catalyzes macrocyclization of the N-terminal 7 residues.

Cyclic heptapeptide that belongs to the MSDIN-like toxin family responsible for a large number of food poisoning cases and deaths. Cycloaminide B is non-toxic to mammals but shows immunosuppressive activity, probably through the inhibition of the action of interleukin-1 and interleukin-2. This Amanita phalloides (Death cap) protein is Cycloamanide B proprotein.